We begin with the raw amino-acid sequence, 560 residues long: Serine palmitoyltransferase 2 (560 aa).

The chain crosses the membrane as a helical span at residues 65–85 (PMLVAVLTYVGYGVLTLFGYL). Residue lysine 377 is modified to N6-(pyridoxal phosphate)lysine.

The protein belongs to the class-II pyridoxal-phosphate-dependent aminotransferase family. As to quaternary structure, component of the serine palmitoyltransferase (SPT) complex, which is composed of SPTLC1, SPTLC2 or SPTLC3 and SPTSSA or SPTSSB. The heterodimer consisting of SPTLC1 and SPTLC2/SPTLC3 forms the catalytic core of the enzyme, while SPTSSA or SPTSSB subunits determine substrate specificity. SPT also interacts with ORMDL proteins, especially ORMDL3, which negatively regulate SPT activity in the presence of ceramides. Forms dimers of heterodimers with SPTLC1. Pyridoxal 5'-phosphate is required as a cofactor.

It is found in the endoplasmic reticulum membrane. It catalyses the reaction L-serine + hexadecanoyl-CoA + H(+) = 3-oxosphinganine + CO2 + CoA. It carries out the reaction octadecanoyl-CoA + L-serine + H(+) = 3-oxoeicosasphinganine + CO2 + CoA. Its pathway is lipid metabolism; sphingolipid metabolism. With respect to regulation, SPT complex catalytic activity is negatively regulated by ORMDL proteins, including ORMDL3, in the presence of ceramides. This mechanism allows to maintain ceramide levels at sufficient concentrations for the production of complex sphingolipids, but which prevents the accumulation of ceramides to levels that trigger apoptosis. Component of the serine palmitoyltransferase multisubunit enzyme (SPT) that catalyzes the initial and rate-limiting step in sphingolipid biosynthesis by condensing L-serine and activated acyl-CoA (most commonly palmitoyl-CoA) to form long-chain bases. The SPT complex is composed of SPTLC1, SPTLC2 or SPTLC3 and SPTSSA or SPTSSB. Within this complex, the heterodimer consisting of SPTLC1 and SPTLC2/SPTLC3 forms the catalytic core. The composition of the serine palmitoyltransferase (SPT) complex determines the substrate preference. The SPTLC1-SPTLC2-SPTSSA complex shows a strong preference for C16-CoA substrate, while the SPTLC1-SPTLC3-SPTSSA isozyme uses both C14-CoA and C16-CoA as substrates, with a slight preference for C14-CoA. The SPTLC1-SPTLC2-SPTSSB complex shows a strong preference for C18-CoA substrate, while the SPTLC1-SPTLC3-SPTSSB isozyme displays an ability to use a broader range of acyl-CoAs, without apparent preference. Crucial for adipogenesis. The sequence is that of Serine palmitoyltransferase 2 (SPTLC2) from Cricetulus griseus (Chinese hamster).